The chain runs to 641 residues: Forkhead box protein P4 (641 aa).

Disordered regions lie at residues 1 to 43 (MMVE…NGEL) and 239 to 264 (SFPTTKVSPPTMHPSLSNGQNTRRES). Polar residues-rich tracts occupy residues 8–27 (IRSTPTSQNGVGSLPNQSDS) and 239–259 (SFPTTKVSPPTMHPSLSNGQN). The C2H2-type zinc-finger motif lies at 278–303 (GECRWPGCEALCEDMGQFIKHLNTEH). Residues 320-341 (VQQLEIQLAKESERLQAMMTHL) form a leucine-zipper region. Residues 354 to 358 (PLNLV) are ctbp1-binding. The segment at residues 436–526 (RPPFTYASLI…PPKMTGSPTL (91 aa)) is a DNA-binding region (fork-head). Positions 563-641 (SSGSVLHGGH…ESESPMEDLP (79 aa)) are disordered. Residues 576–599 (TSTGEPGNSNGSSPRLSPQYSQSI) are compositionally biased toward polar residues. The span at 600–611 (HVKEEPAEDDVR) shows a compositional bias: basic and acidic residues. A compositionally biased stretch (acidic residues) spans 629–641 (RDLESESPMEDLP).

In terms of assembly, dimerization is required for DNA-binding. First expressed in the anterior neural field of stage 15 embryos. At stage 18, localized in three domains of the brain (rostral forebrain, midbrain and hindbrain) and in the eye anlage. Cerebral and retinal expression persists at later stages with additional expression in the branchial arches, at the base of the hatching gland, and in the pancreas.

The protein resides in the nucleus. Its function is as follows. Transcriptional repressor. The protein is Forkhead box protein P4 of Xenopus laevis (African clawed frog).